Here is a 681-residue protein sequence, read N- to C-terminus: Cobalamin-dependent radical SAM methyltransferase TokK (681 aa).

In terms of domain architecture, B12-binding spans 1–144 (MSAELASRGR…ATRLSDHPDY (144 aa)). Cob(II)alamin contacts are provided by asparagine 18, serine 72, tyrosine 74, valine 75, histidine 103, glycine 126, and glutamate 127. In terms of domain architecture, Radical SAM core spans 192–417 (RGLRFYALWE…RMYVERPGTP (226 aa)). [4Fe-4S] cluster contacts are provided by cysteine 206 and cysteine 210. Phenylalanine 212 contributes to the 5'-deoxyadenosine binding site. Residue cysteine 213 participates in [4Fe-4S] cluster binding. Aspartate 214 and cysteine 249 together coordinate cob(II)alamin. 5'-deoxyadenosine-binding residues include glutamine 312, glutamate 349, and glycine 384.

Belongs to the methyltransferase superfamily. Requires [4Fe-4S] cluster as cofactor. The cofactor is cob(II)alamin.

The protein operates within antibiotic biosynthesis. In terms of biological role, methyltransferase involved in the biosynthesis of the beta-lactam carbapenem antibiotic asparenomycin. Catalyzes three consecutive S-adenosyl-L-methionine-dependent methylations to build out the C6-isopropyl side chain in a stereocontrolled manner. This chain is Cobalamin-dependent radical SAM methyltransferase TokK, found in Streptomyces tokunonensis.